Here is a 239-residue protein sequence, read N- to C-terminus: Serine protease SplF (239 aa).

Residues 1–36 form the signal peptide; the sequence is MNKNIIIKSIAALTILTSVTGVGTTMVEGIQQTAKA. Catalysis depends on charge relay system residues His-75, Asp-114, and Ser-192.

Belongs to the peptidase S1B family.

Its subcellular location is the secreted. In Staphylococcus aureus (strain Mu50 / ATCC 700699), this protein is Serine protease SplF (splF).